The following is a 432-amino-acid chain: Cyclin-A2 (432 aa).

Methionine 1 carries the N-acetylmethionine modification. Serine 5 carries the phosphoserine modification. 2 disordered regions span residues 26 to 45 and 55 to 75; these read LQED…QQPR and SGNP…VAPL. A Phosphoserine modification is found at serine 55.

The protein belongs to the cyclin family. Cyclin AB subfamily. In terms of assembly, interacts with the CDK1 and CDK2 protein kinases to form serine/threonine kinase holoenzyme complexes. Interacts with CDK1 (hyperphosphorylated form in G1 and underphosphorylated forms in S and G2). Interacts with CDK2; the interaction increases from G1 to G2. Interacts (associated with CDK2 but not with CDK1) with SCAPER; regulates the activity of CCNA2/CDK2 by transiently maintaining CCNA2 in the cytoplasm. Forms a ternary complex with CDK2 and CDKN1B; CDKN1B inhibits the kinase activity of CDK2 through conformational rearrangements. Interacts with INCA1. (Microbial infection) Interacts with human cytomegalovirus protein UL32. Post-translationally, polyubiquitinated via 'Lys-11'-linked ubiquitin by the anaphase-promoting complex (APC/C), leading to its degradation by the proteasome. Deubiquitinated and stabilized by USP37 enables entry into S phase. Ubiquitinated during the G1 phase by the SCF(FBXO31) complex, leading to its proteasomal degradation.

It is found in the nucleus. Its subcellular location is the cytoplasm. Functionally, cyclin which controls both the G1/S and the G2/M transition phases of the cell cycle. Functions through the formation of specific serine/threonine protein kinase holoenzyme complexes with the cyclin-dependent protein kinases CDK1 or CDK2. The cyclin subunit confers the substrate specificity of these complexes and differentially interacts with and activates CDK1 and CDK2 throughout the cell cycle. This is Cyclin-A2 from Homo sapiens (Human).